Reading from the N-terminus, the 136-residue chain is MARTKQTARKSTGGKAPRKQLATKAARKSAPTTGGVKKPHRYRPGTVALREIRKYQKSTELLIRKLPFQRLVREIAQDFKTDLRFQSHAVLALQEAAEAYLVGLFEDTNLCAIHAKRVTIMPKDIQLARRIRGERA.

A disordered region spans residues M1–R43. K5 carries the post-translational modification N6-methylated lysine. K10 carries the N6-acetyllysine; alternate modification. An N6-methylated lysine; alternate modification is found at K10. Position 11 is a phosphoserine (S11). Residue T12 is modified to Phosphothreonine. N6-acetyllysine is present on K15. Residues K19 and K24 each carry the N6-acetyllysine; alternate modification. Residues K19 and K24 each carry the N6-methylated lysine; alternate modification. At K28 the chain carries N6-methylated lysine. A Phosphoserine modification is found at S29. At K37 the chain carries N6-methylated lysine.

It belongs to the histone H3 family. In terms of assembly, the nucleosome is a histone octamer containing two molecules each of H2A, H2B, H3 and H4 assembled in one H3-H4 heterotetramer and two H2A-H2B heterodimers. The octamer wraps approximately 147 bp of DNA. In terms of processing, acetylation is generally linked to gene activation. Can be acetylated to form H3K9ac, H3K14ac, H3K18ac and H3K23ac. H3K9ac could compete with H3K9me and prevent gene silencing. H3K9ac is restricted to euchromatin. Methylated to form mainly H3K4me, H3K9me, H3K18me, H3K23me, H3K27me and H3K36me. H3K4me1/2/3, H3K9me3, H3K27me3 and H3K36me1/2/3 are typical marks for euchromatin, whereas heterochromatic chromocenters are enriched in H3K9me1/2 and H3K27me1/2. H2BK143ub1 is probably prerequisite for H3K4me. Post-translationally, can be phosphorylated to form H3S10ph, H3T11ph and H3S28ph.

Its subcellular location is the nucleus. It is found in the chromosome. In terms of biological role, variant histone H3 which replaces conventional H3 in a wide range of nucleosomes in active genes. Constitutes the predominant form of histone H3 in non-dividing cells and is incorporated into chromatin independently of DNA synthesis. Deposited at sites of nucleosomal displacement throughout transcribed genes, suggesting that it represents an epigenetic imprint of transcriptionally active chromatin. Nucleosomes wrap and compact DNA into chromatin, limiting DNA accessibility to the cellular machineries which require DNA as a template. Histones thereby play a central role in transcription regulation, DNA repair, DNA replication and chromosomal stability. DNA accessibility is regulated via a complex set of post-translational modifications of histones, also called histone code, and nucleosome remodeling. The protein is Histone H3.3 (HIS3) of Gossypium hirsutum (Upland cotton).